Here is a 349-residue protein sequence, read N- to C-terminus: N-formyl peptide receptor 3 (349 aa).

Topologically, residues M1–I27 are extracellular. Residues N4 and N10 are each glycosylated (N-linked (GlcNAc...) asparagine). A helical membrane pass occupies residues F28–V50. The Cytoplasmic segment spans residues A51 to T61. The helical transmembrane segment at I62–V83 threads the bilayer. The Extracellular segment spans residues S84–L100. An intrachain disulfide couples C98 to C176. The helical transmembrane segment at V101–L121 threads the bilayer. Over D122–S140 the chain is Cytoplasmic. Residues L141–I162 form a helical membrane-spanning segment. Residues F163 to H205 are Extracellular-facing. The chain crosses the membrane as a helical span at residues F206–A226. Residues K227–V242 are Cytoplasmic-facing. A helical membrane pass occupies residues F243–V266. Over W267–P286 the chain is Extracellular. A helical membrane pass occupies residues T287–G306. Residues S307–E349 lie on the Cytoplasmic side of the membrane. The disordered stretch occupies residues E327–E349. Residues S331–S343 show a composition bias toward polar residues.

The protein belongs to the G-protein coupled receptor 1 family.

It is found in the cell membrane. Functionally, low affinity receptor for N-formyl-methionyl peptides, which are powerful neutrophils chemotactic factors. Binding of FMLP to the receptor causes activation of neutrophils. This response is mediated via a G-protein that activates a phosphatidylinositol-calcium second messenger system. The protein is N-formyl peptide receptor 3 (FPR3) of Gorilla gorilla gorilla (Western lowland gorilla).